Reading from the N-terminus, the 307-residue chain is Retron Ec86 putative ribosyltransferase/DNA-binding protein (307 aa).

Functionally, possible ribosyltransferase/DNA-binding component of antiviral defense system retron Ec86, composed of a non-coding RNA (ncRNA), a ribosyltransferase/DNA-binding protein and a reverse transcriptase (RT). Expression of the 3-gene retron confers protection against bacteriophages T5. At multiplicity of infection (MOI) of 0.02 cultures grow normally when infected with T5 without collapsing, at MOI 2 cultures enter growth stasis. The protein is Retron Ec86 putative ribosyltransferase/DNA-binding protein of Escherichia coli.